Here is a 42-residue protein sequence, read N- to C-terminus: Tachystatin-B2 (42 aa).

Intrachain disulfides connect Cys4–Cys20, Cys11–Cys25, and Cys19–Cys37.

In terms of tissue distribution, granular hemocytes, small secretory granules.

It is found in the secreted. In terms of biological role, exhibits stronger antimicrobial activity against the Gram-positive bacteria (S.aureus (IC(50) is 7.4 ug/ml)) and fungi (C.albicans (IC(50) is 3.0 ug/ml) and P.pastoris (IC(50) is 0.1 ug/ml)) than Gram-negative bacteria (E.coli no inhibition at 100 ug/ml). Binds to chitin (4.3 uM are required to obtain 50% of binding). Does not cause hemolysis on sheep erythrocytes. Has no blocking activity on the P-type calcium channel. This Tachypleus tridentatus (Japanese horseshoe crab) protein is Tachystatin-B2.